Here is a 627-residue protein sequence, read N- to C-terminus: MAGERPPLRGPGPGEAPGEGPGGAGGGPGRGRPSSYRALRSAVSSLARVDDFDCAEKIGAGFFSEVYKVRHRQSGQVMVLKMNKLPSNRSNTLREVQLMNRLRHPNILRFMGVCVHQGQLHALTEYMNGGTLEQLLSSPEPLSWPVRLHLALDIAQGLRYLHAKGVFHRDLTSKNCLVRREDRGFTAVVGDFGLAEKIPVYREGTRKEPLAVVGSPYWMAPEVLRGELYDEKADVFAFGIVLCELIARVPADPDYLPRTEDFGLDVPAFRTLVGNDCPLPFLLLAIHCCSMEPSTRAPFTEITQHLEQILEQQPEATPLAKPPLTKAPLTYNQGSVPRGGPSATLPRPDPRLSRSRSDLFLPPSPESPPSWGDNLTRVNPFSLREDLRGGKIKLLDTPCKPATPLPLVPPSPLTSTQLPLVTTPDILVQPETPVRRCRSLPSSPELPRRMETALPGPGPSPMGPTEERMDCEGSSPEPEPPGLAPQLPLAVATDNFISTCSSASQPWSPRSGPPLNNNPPAVVVNSPQGWAREPWNRAQHSLPRAAALERTEPSPPPSAPREPEEGLPCPGCCLGPFSFGFLSMCPRPTPAVARYRNLNCEAGSLLCHRGHHAKPPTPSLQLPGARS.

The segment at 1 to 36 (MAGERPPLRGPGPGEAPGEGPGGAGGGPGRGRPSSY) is disordered. Over residues 11–30 (PGPGEAPGEGPGGAGGGPGR) the composition is skewed to gly residues. A Protein kinase domain is found at 52–309 (FDCAEKIGAG…TEITQHLEQI (258 aa)). Residues 58–66 (IGAGFFSEV) and Lys-81 each bind ATP. Residue Asp-170 is the Proton acceptor of the active site. The residue at position 215 (Ser-215) is a Phosphoserine; by autocatalysis. Low complexity predominate over residues 316-330 (ATPLAKPPLTKAPLT). Disordered stretches follow at residues 316–373 (ATPL…SWGD), 436–485 (RCRS…GLAP), 500–519 (CSSASQPWSPRSGPPLNNNP), and 532–565 (REPWNRAQHSLPRAAALERTEPSPPPSAPREPEE). Arg-338 bears the Omega-N-methylarginine mark. The segment covering 348–357 (PDPRLSRSRS) has biased composition (basic and acidic residues). The tract at residues 421 to 525 (VTTPDILVQP…NNNPPAVVVN (105 aa)) is required for interaction with YWHAB. Residues 528–625 (QGWAREPWNR…PTPSLQLPGA (98 aa)) are required for interaction with PARVA. A required for interaction with SPRED1 and SPRY2. Required for TESK1-mediated dephosphorylation of SPRY2 and SPRY2 inhibition of ERK phosphorylation region spans residues 528–627 (QGWAREPWNR…PSLQLPGARS (100 aa)).

The protein belongs to the protein kinase superfamily. TKL Ser/Thr protein kinase family. In terms of assembly, interacts (via both C- and N-termini) with SPRY4 (via C-terminus); the interaction inhibits TESK1 kinase activity. Interacts with TAOK1; the interaction inhibits TAOK1 kinase activity. Interacts (via C-terminus) with SPRED1 (via C-terminus); the interaction inhibits TESK1 kinase activity. Interacts (via C-terminus) with PARVA/PARVIN (via C-terminus); the interaction inhibits TESK1 kinase activity. Interacts with YWHAB/14-3-3 beta; the interaction is dependent on the phosphorylation of TESK1 Ser-439 and inhibits TESK1 kinase activity. Interacts with SPRY1, SPRY3 and SPRED2. Interacts (via C-terminus) with SPRY2 (via C-terminus); the interaction disrupts SPRY2 interaction with PPP2CA/PP2A-C, possibly by vesicular sequestration of SPRY2. Therefore dephosphorylation of SPRY2 by the serine/threonine-protein phosphatase 2A (PP2A) holoenzyme is lost, inhibiting its interaction with GRB2. Mg(2+) is required as a cofactor. Requires Mn(2+) as cofactor. Post-translationally, autophosphorylated on serine and tyrosine residues. In terms of tissue distribution, expressed in testes and brain (at protein level).

The protein localises to the cytoplasm. The protein resides in the perinuclear region. Its subcellular location is the cytoskeleton. It localises to the microtubule organizing center. It is found in the centrosome. The protein localises to the cell projection. The protein resides in the lamellipodium. It carries out the reaction L-seryl-[protein] + ATP = O-phospho-L-seryl-[protein] + ADP + H(+). The enzyme catalyses L-threonyl-[protein] + ATP = O-phospho-L-threonyl-[protein] + ADP + H(+). It catalyses the reaction L-tyrosyl-[protein] + ATP = O-phospho-L-tyrosyl-[protein] + ADP + H(+). With respect to regulation, activated by autophosphorylation on Ser-215. Kinase activity is inhibited by SPRED1. Functionally, dual specificity protein kinase activity catalyzing autophosphorylation and phosphorylation of exogenous substrates on both serine/threonine and tyrosine residues. Regulates the cellular cytoskeleton by enhancing actin stress fiber formation via phosphorylation of cofilin and by preventing microtubule breakdown via inhibition of TAOK1/MARKK kinase activity. Inhibits podocyte motility via regulation of actin cytoskeletal dynamics and phosphorylation of CFL1. Positively regulates integrin-mediated cell spreading, via phosphorylation of cofilin. Suppresses ciliogenesis via multiple pathways; phosphorylation of CFL1, suppression of ciliary vesicle directional trafficking to the ciliary base, and by facilitating YAP1 nuclear localization where it acts as a transcriptional corepressor of the TEAD4 target genes AURKA and PLK1. Probably plays a central role at and after the meiotic phase of spermatogenesis. The chain is Dual specificity testis-specific protein kinase 1 (Tesk1) from Mus musculus (Mouse).